Here is a 275-residue protein sequence, read N- to C-terminus: MSSVTMRQMLEAGVHFGHQTRYWNPKMAPFIFGERNKIHIINLEQTLPLFNDAMNYLGKLAGNGGKILFVGTKRSARDTIAEEALRCKMPYVNHRWLGGMLTNFKTVRESIRRLKDLELMREDGTFNRLSKKEALMRTRELEKLERSLGGIKDMNGLPDAMFVIDVGYEKIAVKEANKLGIPVIAVVDTNNSIEGVDYVIPGNDDAMRAIQLYVSAAADAIANAQVTSRATAAPAGDDEFVEVREGAEASKKKATVKKKAAPRAASGESAEAAAE.

The segment at 244-275 is disordered; that stretch reads REGAEASKKKATVKKKAAPRAASGESAEAAAE. Over residues 252–261 the composition is skewed to basic residues; that stretch reads KKATVKKKAA. Residues 262–275 show a composition bias toward low complexity; that stretch reads PRAASGESAEAAAE.

It belongs to the universal ribosomal protein uS2 family.

The polypeptide is Small ribosomal subunit protein uS2 (Thioalkalivibrio sulfidiphilus (strain HL-EbGR7)).